A 281-amino-acid chain; its full sequence is 4-hydroxy-3-methylbut-2-enyl diphosphate reductase (281 aa).

C12 is a binding site for [4Fe-4S] cluster. H41 and H74 together coordinate (2E)-4-hydroxy-3-methylbut-2-enyl diphosphate. Residues H41 and H74 each contribute to the dimethylallyl diphosphate site. Residues H41 and H74 each coordinate isopentenyl diphosphate. C96 contributes to the [4Fe-4S] cluster binding site. H124 lines the (2E)-4-hydroxy-3-methylbut-2-enyl diphosphate pocket. H124 contributes to the dimethylallyl diphosphate binding site. Residue H124 participates in isopentenyl diphosphate binding. The Proton donor role is filled by E126. Residue T164 coordinates (2E)-4-hydroxy-3-methylbut-2-enyl diphosphate. C193 serves as a coordination point for [4Fe-4S] cluster. (2E)-4-hydroxy-3-methylbut-2-enyl diphosphate is bound by residues S221, N223, and S265. Positions 221, 223, and 265 each coordinate dimethylallyl diphosphate. Residues S221, N223, and S265 each coordinate isopentenyl diphosphate.

The protein belongs to the IspH family. Requires [4Fe-4S] cluster as cofactor.

The enzyme catalyses isopentenyl diphosphate + 2 oxidized [2Fe-2S]-[ferredoxin] + H2O = (2E)-4-hydroxy-3-methylbut-2-enyl diphosphate + 2 reduced [2Fe-2S]-[ferredoxin] + 2 H(+). The catalysed reaction is dimethylallyl diphosphate + 2 oxidized [2Fe-2S]-[ferredoxin] + H2O = (2E)-4-hydroxy-3-methylbut-2-enyl diphosphate + 2 reduced [2Fe-2S]-[ferredoxin] + 2 H(+). It functions in the pathway isoprenoid biosynthesis; dimethylallyl diphosphate biosynthesis; dimethylallyl diphosphate from (2E)-4-hydroxy-3-methylbutenyl diphosphate: step 1/1. The protein operates within isoprenoid biosynthesis; isopentenyl diphosphate biosynthesis via DXP pathway; isopentenyl diphosphate from 1-deoxy-D-xylulose 5-phosphate: step 6/6. Catalyzes the conversion of 1-hydroxy-2-methyl-2-(E)-butenyl 4-diphosphate (HMBPP) into a mixture of isopentenyl diphosphate (IPP) and dimethylallyl diphosphate (DMAPP). Acts in the terminal step of the DOXP/MEP pathway for isoprenoid precursor biosynthesis. This Oleidesulfovibrio alaskensis (strain ATCC BAA-1058 / DSM 17464 / G20) (Desulfovibrio alaskensis) protein is 4-hydroxy-3-methylbut-2-enyl diphosphate reductase.